The sequence spans 197 residues: Ribosomal RNA large subunit methyltransferase E (197 aa).

S-adenosyl-L-methionine-binding residues include glycine 50, tryptophan 52, aspartate 70, aspartate 88, and aspartate 111. Catalysis depends on lysine 151, which acts as the Proton acceptor.

Belongs to the class I-like SAM-binding methyltransferase superfamily. RNA methyltransferase RlmE family.

It localises to the cytoplasm. The enzyme catalyses uridine(2552) in 23S rRNA + S-adenosyl-L-methionine = 2'-O-methyluridine(2552) in 23S rRNA + S-adenosyl-L-homocysteine + H(+). Functionally, specifically methylates the uridine in position 2552 of 23S rRNA at the 2'-O position of the ribose in the fully assembled 50S ribosomal subunit. The polypeptide is Ribosomal RNA large subunit methyltransferase E (Syntrophobacter fumaroxidans (strain DSM 10017 / MPOB)).